We begin with the raw amino-acid sequence, 72 residues long: Bradykinin-potentiating peptide BmKbpp (72 aa).

Positions 1–22 (MNKKTLLVIFFVTMLIVDEVNS) are cleaved as a signal peptide. Residues 70-72 (RRR) constitute a propeptide that is removed on maturation.

The protein belongs to the non-disulfide-bridged peptide (NDBP) superfamily. Long chain multifunctional peptide (group 2) family. Expressed by the venom gland.

The protein localises to the secreted. In terms of biological role, amphipathic peptide that shows bradykinin potentiating activity and antimicrobial activities against bacteria and fungi. Has higher antibacterial activities against Gram-negative than against Gram-positive bacteria. Also inhibits NADPH oxidase-dependent superoxide production (IC(50) is 0.4 uM on granulocytes stimulated with PMA, IC(50) is 0.51 uM on HL-60 cells undifferentiated and IC(50) is 0.53 uM on HL-60 cells treated with DMSO). The C-terminal peptide shows a higher bradykinin potentiating activity than the complete peptide. The sequence is that of Bradykinin-potentiating peptide BmKbpp from Olivierus martensii (Manchurian scorpion).